Consider the following 51-residue polypeptide: Large ribosomal subunit protein eL39 (51 aa).

This sequence belongs to the eukaryotic ribosomal protein eL39 family.

The polypeptide is Large ribosomal subunit protein eL39 (Methanosarcina barkeri (strain Fusaro / DSM 804)).